A 966-amino-acid chain; its full sequence is Alanine--tRNA ligase, cytoplasmic (966 aa).

Zn(2+) contacts are provided by His-604, His-608, Cys-723, and His-727.

Belongs to the class-II aminoacyl-tRNA synthetase family. As to quaternary structure, monomer. Requires Zn(2+) as cofactor.

Its subcellular location is the cytoplasm. The enzyme catalyses tRNA(Ala) + L-alanine + ATP = L-alanyl-tRNA(Ala) + AMP + diphosphate. Catalyzes the attachment of alanine to tRNA(Ala) in a two-step reaction: alanine is first activated by ATP to form Ala-AMP and then transferred to the acceptor end of tRNA(Ala). Also edits incorrectly charged tRNA(Ala) via its editing domain. The polypeptide is Alanine--tRNA ligase, cytoplasmic (Drosophila melanogaster (Fruit fly)).